Reading from the N-terminus, the 372-residue chain is Fatty acid 2-hydroxylase (372 aa).

The region spanning 8-86 (AASFTSAEVQ…LEQYYVGELR (79 aa)) is the Cytochrome b5 heme-binding domain. Residues histidine 43 and histidine 69 each contribute to the heme site. Transmembrane regions (helical) follow at residues 168–188 (VWYSVPIIWVPLVLYLSWSYY) and 213–233 (SVFIGLFVLGMLIWTLVEYLI). Positions 219–361 (FVLGMLIWTL…TKLWDYFFHT (143 aa)) constitute a Fatty acid hydroxylase domain. Positions 234, 239, 257, 260, and 261 each coordinate Zn(2+). 2 helical membrane passes run 268-288 (SRLVFPPVPASVVVAFFYVFL) and 290-310 (LILPEAVAGILFAGGLLGYVL). Residues histidine 315, histidine 319, histidine 336, histidine 339, and histidine 340 each contribute to the Zn(2+) site.

It belongs to the sterol desaturase family. SCS7 subfamily. Zn(2+) serves as cofactor. As to expression, detected in oligodendrocytes (at protein level). Detected in sciatic nerve.

The protein localises to the endoplasmic reticulum membrane. Its subcellular location is the microsome membrane. It catalyses the reaction a 1,2-saturated fatty acid + 2 Fe(II)-[cytochrome b5] + O2 + 2 H(+) = a (R)-2-hydroxy fatty acid + 2 Fe(III)-[cytochrome b5] + H2O. The enzyme catalyses hexadecanoate + 2 Fe(II)-[cytochrome b5] + O2 + 2 H(+) = (R)-2-hydroxyhexadecanoate + 2 Fe(III)-[cytochrome b5] + H2O. It carries out the reaction octadecanoate + 2 Fe(II)-[cytochrome b5] + O2 + 2 H(+) = (R)-2-hydroxyoctadecanoate + 2 Fe(III)-[cytochrome b5] + H2O. The catalysed reaction is docosanoate + 2 Fe(II)-[cytochrome b5] + O2 + 2 H(+) = 2-hydroxydocosanoate + 2 Fe(III)-[cytochrome b5] + H2O. It catalyses the reaction tetracosanoate + 2 Fe(II)-[cytochrome b5] + O2 + 2 H(+) = (R)-2-hydroxytetracosanoate + 2 Fe(III)-[cytochrome b5] + H2O. It functions in the pathway lipid metabolism; fatty acid metabolism. It participates in sphingolipid metabolism; galactosylceramide biosynthesis. Functionally, catalyzes the hydroxylation of free fatty acids at the C-2 position to produce 2-hydroxy fatty acids, which are building blocks of sphingolipids and glycosphingolipids common in neural tissue and epidermis. FA2H is stereospecific for the production of (R)-2-hydroxy fatty acids. Plays an essential role in the synthesis of galactosphingolipids of the myelin sheath. Responsible for the synthesis of sphingolipids and glycosphingolipids involved in the formation of epidermal lamellar bodies critical for skin permeability barrier. Participates in the synthesis of glycosphingolipids and a fraction of type II wax diesters in sebaceous gland, specifically regulating hair follicle homeostasis. Involved in the synthesis of sphingolipids of plasma membrane rafts, controlling lipid raft mobility and trafficking of raft-associated proteins. This Rattus norvegicus (Rat) protein is Fatty acid 2-hydroxylase.